A 738-amino-acid chain; its full sequence is Polyribonucleotide nucleotidyltransferase (738 aa).

Mg(2+)-binding residues include Asp-528 and Asp-534. The KH domain occupies 594–653; that stretch reads PRVVRVKIPVQKIGELIGPKGKVINSIQDETGAEISIEDDGTVYIGSSQADSSEKAVAMV. Positions 665-737 constitute an S1 motif domain; the sequence is GSQFLGTVVK…DRGKLCLVAV (73 aa).

Belongs to the polyribonucleotide nucleotidyltransferase family. Requires Mg(2+) as cofactor.

It localises to the cytoplasm. It catalyses the reaction RNA(n+1) + phosphate = RNA(n) + a ribonucleoside 5'-diphosphate. Functionally, involved in mRNA degradation. Catalyzes the phosphorolysis of single-stranded polyribonucleotides processively in the 3'- to 5'-direction. This Tropheryma whipplei (strain Twist) (Whipple's bacillus) protein is Polyribonucleotide nucleotidyltransferase.